A 428-amino-acid polypeptide reads, in one-letter code: Elongation factor 1-alpha (428 aa).

The region spanning 5–225 (KPVLNVAFIG…DKFQPPEKPT (221 aa)) is the tr-type G domain. Residues 14–21 (GHVDAGKS) are G1. GTP is bound at residue 14–21 (GHVDAGKS). Ser-21 provides a ligand contact to Mg(2+). The G2 stretch occupies residues 70–74 (GVTID). A G3 region spans residues 91 to 94 (DCPG). GTP is bound by residues 91–95 (DCPGH) and 149–152 (NKMD). The G4 stretch occupies residues 149-152 (NKMD). The G5 stretch occupies residues 189-191 (ASL).

It belongs to the TRAFAC class translation factor GTPase superfamily. Classic translation factor GTPase family. EF-Tu/EF-1A subfamily.

Its subcellular location is the cytoplasm. It carries out the reaction GTP + H2O = GDP + phosphate + H(+). In terms of biological role, GTP hydrolase that promotes the GTP-dependent binding of aminoacyl-tRNA to the A-site of ribosomes during protein biosynthesis. This is Elongation factor 1-alpha from Methanocaldococcus jannaschii (strain ATCC 43067 / DSM 2661 / JAL-1 / JCM 10045 / NBRC 100440) (Methanococcus jannaschii).